The primary structure comprises 423 residues: UPF0597 protein Emin_0811 (423 aa).

It belongs to the UPF0597 family.

This Elusimicrobium minutum (strain Pei191) protein is UPF0597 protein Emin_0811.